Consider the following 232-residue polypeptide: MQGSRLIVALDTASWEQALKWVDRLPQVLWWKVGLELFTAVGPQILQALKERGKRIFLDLKLHDIPHTVGRAAQVAVGYGVDLLTVHAAGGSAMLRAAVAATQGSSCRLLAVTLLTSLGPDQVRQELGVERDPGDYVLQLARLALDQGVSGLVCSPQEVGRLRQALGPEVLLVTPGIRLGDPEAEDDQRRVCTPAAALRAGADYLVVGRPITAAADPVSAWQRFQAVEEAIG.

Substrate is bound by residues D11, K32, 59 to 68 (DLKLHDIPHT), T116, R178, Q188, G208, and R209. K61 serves as the catalytic Proton donor.

It belongs to the OMP decarboxylase family. Type 1 subfamily. In terms of assembly, homodimer.

The enzyme catalyses orotidine 5'-phosphate + H(+) = UMP + CO2. It participates in pyrimidine metabolism; UMP biosynthesis via de novo pathway; UMP from orotate: step 2/2. Its function is as follows. Catalyzes the decarboxylation of orotidine 5'-monophosphate (OMP) to uridine 5'-monophosphate (UMP). The polypeptide is Orotidine 5'-phosphate decarboxylase (Synechococcus sp. (strain JA-3-3Ab) (Cyanobacteria bacterium Yellowstone A-Prime)).